Reading from the N-terminus, the 78-residue chain is D-alanyl carrier protein (78 aa).

Residues 1-78 (MEFREQVLNL…KIVEALEELR (78 aa)) enclose the Carrier domain. Serine 36 is modified (O-(pantetheine 4'-phosphoryl)serine).

Belongs to the DltC family. In terms of processing, 4'-phosphopantetheine is transferred from CoA to a specific serine of apo-DCP.

The protein localises to the cytoplasm. The protein operates within cell wall biogenesis; lipoteichoic acid biosynthesis. Functionally, carrier protein involved in the D-alanylation of lipoteichoic acid (LTA). The loading of thioester-linked D-alanine onto DltC is catalyzed by D-alanine--D-alanyl carrier protein ligase DltA. The DltC-carried D-alanyl group is further transferred to cell membrane phosphatidylglycerol (PG) by forming an ester bond, probably catalyzed by DltD. D-alanylation of LTA plays an important role in modulating the properties of the cell wall in Gram-positive bacteria, influencing the net charge of the cell wall. The polypeptide is D-alanyl carrier protein (Staphylococcus aureus (strain Mu50 / ATCC 700699)).